The primary structure comprises 244 residues: Large ribosomal subunit protein uL30B (244 aa).

The segment covering 1–11 (MSTEKILTPES) has biased composition (polar residues). The segment at 1-21 (MSTEKILTPESQLKKTKAQQK) is disordered.

This sequence belongs to the universal ribosomal protein uL30 family. Component of the large ribosomal subunit (LSU). Mature yeast ribosomes consist of a small (40S) and a large (60S) subunit. The 40S small subunit contains 1 molecule of ribosomal RNA (18S rRNA) and 33 different proteins (encoded by 57 genes). The large 60S subunit contains 3 rRNA molecules (25S, 5.8S and 5S rRNA) and 46 different proteins (encoded by 81 genes).

It localises to the cytoplasm. Component of the ribosome, a large ribonucleoprotein complex responsible for the synthesis of proteins in the cell. The small ribosomal subunit (SSU) binds messenger RNAs (mRNAs) and translates the encoded message by selecting cognate aminoacyl-transfer RNA (tRNA) molecules. The large subunit (LSU) contains the ribosomal catalytic site termed the peptidyl transferase center (PTC), which catalyzes the formation of peptide bonds, thereby polymerizing the amino acids delivered by tRNAs into a polypeptide chain. The nascent polypeptides leave the ribosome through a tunnel in the LSU and interact with protein factors that function in enzymatic processing, targeting, and the membrane insertion of nascent chains at the exit of the ribosomal tunnel. This is Large ribosomal subunit protein uL30B from Saccharomyces cerevisiae (strain ATCC 204508 / S288c) (Baker's yeast).